The following is a 315-amino-acid chain: L-lactate dehydrogenase (315 aa).

NAD(+) contacts are provided by residues Val-16, Asp-37, and 81-82 (GA). Substrate contacts are provided by residues Gln-84, Arg-90, and 122-125 (NPVD). NAD(+)-binding positions include 120–122 (VSN) and Ser-145. 150-153 (DTAR) is a substrate binding site. Positions 155 and 170 each coordinate beta-D-fructose 1,6-bisphosphate. The Proton acceptor role is filled by His-177. Tyr-224 carries the post-translational modification Phosphotyrosine. Position 233 (Thr-233) interacts with substrate.

Belongs to the LDH/MDH superfamily. LDH family. Homotetramer.

Its subcellular location is the cytoplasm. The catalysed reaction is (S)-lactate + NAD(+) = pyruvate + NADH + H(+). The protein operates within fermentation; pyruvate fermentation to lactate; (S)-lactate from pyruvate: step 1/1. Its activity is regulated as follows. Allosterically activated by fructose 1,6-bisphosphate (FBP). Its function is as follows. Catalyzes the conversion of lactate to pyruvate. The sequence is that of L-lactate dehydrogenase from Treponema denticola (strain ATCC 35405 / DSM 14222 / CIP 103919 / JCM 8153 / KCTC 15104).